The primary structure comprises 269 residues: Hydroxyethylthiazole kinase (269 aa).

Met-46 lines the substrate pocket. Residues Arg-121 and Thr-166 each contribute to the ATP site. Substrate is bound at residue Gly-193.

It belongs to the Thz kinase family. Requires Mg(2+) as cofactor.

It catalyses the reaction 5-(2-hydroxyethyl)-4-methylthiazole + ATP = 4-methyl-5-(2-phosphooxyethyl)-thiazole + ADP + H(+). The protein operates within cofactor biosynthesis; thiamine diphosphate biosynthesis; 4-methyl-5-(2-phosphoethyl)-thiazole from 5-(2-hydroxyethyl)-4-methylthiazole: step 1/1. In terms of biological role, catalyzes the phosphorylation of the hydroxyl group of 4-methyl-5-beta-hydroxyethylthiazole (THZ). This is Hydroxyethylthiazole kinase from Limosilactobacillus reuteri (strain DSM 20016) (Lactobacillus reuteri).